A 206-amino-acid polypeptide reads, in one-letter code: Thymidylate kinase (206 aa).

Residue Gly10–Ser17 coordinates ATP.

The protein belongs to the thymidylate kinase family.

It carries out the reaction dTMP + ATP = dTDP + ADP. Functionally, phosphorylation of dTMP to form dTDP in both de novo and salvage pathways of dTTP synthesis. This is Thymidylate kinase (tmk) from Neisseria meningitidis serogroup A / serotype 4A (strain DSM 15465 / Z2491).